A 235-amino-acid polypeptide reads, in one-letter code: Small ribosomal subunit protein eS4 (235 aa).

The region spanning 38–101 is the S4 RNA-binding domain; that stretch reads IPLLVLVRDF…EKSYRILFDE (64 aa).

It belongs to the eukaryotic ribosomal protein eS4 family.

This is Small ribosomal subunit protein eS4 (rps4e) from Archaeoglobus fulgidus (strain ATCC 49558 / DSM 4304 / JCM 9628 / NBRC 100126 / VC-16).